The chain runs to 277 residues: Protein EURL homolog (277 aa).

A disordered region spans residues 173 to 201 (LGLWPGERPQNREQRDSRQRRHSGHSREE). Residues 197–229 (HSREELMRKNVEELRQLNEQLLLQIQNVFEELS) are a coiled coil.

This sequence belongs to the EURL family.

Its function is as follows. Plays a role in cortical progenitor cell proliferation and differentiation. May promote dendritic spine development of post-migratory cortical projection neurons by modulating the beta-catenin signaling pathway. This Danio rerio (Zebrafish) protein is Protein EURL homolog.